The following is a 150-amino-acid chain: Large ribosomal subunit protein bL9 (150 aa).

This sequence belongs to the bacterial ribosomal protein bL9 family.

Its function is as follows. Binds to the 23S rRNA. This Pediococcus pentosaceus (strain ATCC 25745 / CCUG 21536 / LMG 10740 / 183-1w) protein is Large ribosomal subunit protein bL9.